The sequence spans 276 residues: Formamidopyrimidine-DNA glycosylase (276 aa).

The active-site Schiff-base intermediate with DNA is the P2. Catalysis depends on E3, which acts as the Proton donor. Catalysis depends on K58, which acts as the Proton donor; for beta-elimination activity. Residues H92, R111, and K154 each coordinate DNA. The FPG-type zinc finger occupies 239–273 (QVYGHAGEECSSCGTILEKIKVNGRGTTFCPHCQV). The Proton donor; for delta-elimination activity role is filled by R263.

Belongs to the FPG family. As to quaternary structure, monomer. Requires Zn(2+) as cofactor.

The enzyme catalyses Hydrolysis of DNA containing ring-opened 7-methylguanine residues, releasing 2,6-diamino-4-hydroxy-5-(N-methyl)formamidopyrimidine.. It carries out the reaction 2'-deoxyribonucleotide-(2'-deoxyribose 5'-phosphate)-2'-deoxyribonucleotide-DNA = a 3'-end 2'-deoxyribonucleotide-(2,3-dehydro-2,3-deoxyribose 5'-phosphate)-DNA + a 5'-end 5'-phospho-2'-deoxyribonucleoside-DNA + H(+). Functionally, involved in base excision repair of DNA damaged by oxidation or by mutagenic agents. Acts as a DNA glycosylase that recognizes and removes damaged bases. Has a preference for oxidized purines, such as 7,8-dihydro-8-oxoguanine (8-oxoG). Has AP (apurinic/apyrimidinic) lyase activity and introduces nicks in the DNA strand. Cleaves the DNA backbone by beta-delta elimination to generate a single-strand break at the site of the removed base with both 3'- and 5'-phosphates. The protein is Formamidopyrimidine-DNA glycosylase of Lactobacillus gasseri (strain ATCC 33323 / DSM 20243 / BCRC 14619 / CIP 102991 / JCM 1131 / KCTC 3163 / NCIMB 11718 / NCTC 13722 / AM63).